The sequence spans 400 residues: Enoyl-[acyl-carrier-protein] reductase [NADH] (400 aa).

NAD(+) is bound by residues 48-53 (GSSSGY), 74-75 (FE), 111-112 (DA), and 139-140 (LA). Tyrosine 225 provides a ligand contact to substrate. Tyrosine 235 acts as the Proton donor in catalysis. Residues lysine 244 and 273–275 (VVT) each bind NAD(+).

Belongs to the TER reductase family. In terms of assembly, monomer.

It catalyses the reaction a 2,3-saturated acyl-[ACP] + NAD(+) = a (2E)-enoyl-[ACP] + NADH + H(+). The protein operates within lipid metabolism; fatty acid biosynthesis. Involved in the final reduction of the elongation cycle of fatty acid synthesis (FAS II). Catalyzes the reduction of a carbon-carbon double bond in an enoyl moiety that is covalently linked to an acyl carrier protein (ACP). The chain is Enoyl-[acyl-carrier-protein] reductase [NADH] from Aliivibrio fischeri (strain MJ11) (Vibrio fischeri).